A 384-amino-acid polypeptide reads, in one-letter code: DNA repair protein RAD51 homolog 2 (384 aa).

Residues 1 to 75 (MGSKKLKRVG…TAYGIKAQRS (75 aa)) are interaction with RAD51C. 108 to 115 (GPPGCGKT) contributes to the ATP binding site.

Belongs to the RecA family. RAD51 subfamily. In terms of assembly, part of the BCDX2 complex consisting of RAD51B, RAD51C, RAD51D and XRCC2; the complex has a ring-like structure arranged into a flat disc around a central channel. The BCDX2 subcomplex RAD51B:RAD51C interacts with RAD51. Interacts with SWSAP1; involved in homologous recombination repair. Interacts with HELQ. Post-translationally, phosphorylated on tyrosine residues by BCR-ABL. As to expression, expressed in a wide range of tissues.

The protein resides in the nucleus. Its function is as follows. Involved in the homologous recombination repair (HRR) pathway of double-stranded DNA breaks arising during DNA replication or induced by DNA-damaging agents. May promote the assembly of presynaptic RAD51 nucleoprotein filaments. Binds single-stranded DNA and double-stranded DNA and has DNA-dependent ATPase activity. Part of the RAD51 paralog protein complex BCDX2 which acts in the BRCA1-BRCA2-dependent HR pathway. Upon DNA damage, BCDX2 acts downstream of BRCA2 recruitment and upstream of RAD51 recruitment. BCDX2 binds predominantly to the intersection of the four duplex arms of the Holliday junction and to junction of replication forks. The BCDX2 complex was originally reported to bind single-stranded DNA, single-stranded gaps in duplex DNA and specifically to nicks in duplex DNA. The BCDX2 subcomplex RAD51B:RAD51C exhibits single-stranded DNA-dependent ATPase activity suggesting an involvement in early stages of the HR pathway. This Homo sapiens (Human) protein is DNA repair protein RAD51 homolog 2 (RAD51B).